The sequence spans 565 residues: GEEEDEEEEEEEESEEGGGEEEESEEEEEEKQENESHHQATSKEYIAVGDFTAQQAGDLTFKKREILLIIEKKPDGWWIAKNAKGNKGLIPRTYVEPYNKEEGQDTSEEEDSEEDVEVGDQTAGGEEVKQRTDSHWSAVQKAISEQINTVDVLTTMGAIPAGFRPSTLFQLLEEGNQFRASYFLQPELTPSQLAFRDLMWDAKTGTIRSRPSRVSFILTLWSCKMIPLPGTSIQVLSRHVRLCIFDGNKVLSNIHTVRATWQSKKPKTWTFSPQVTGILPCLLDGDCFIRSNSSSPDLGILFELGISYIRNSTGERGELSCGWVFLKLFDASGIPIPAKTYELFLNGGTPYEKGVEVDPSVSRRAYGSVFHQMMTMRRQPQLLVKLRSLNRRSRDLLSLLPETLIGSMCTIHLLIFYRQILGDVLLKDRTSMQSADLISNPVLATFPKLLEQPDMMDALRSSWAEKESTLKRSEKRDKEFLKAMFLLVYHDCVVPLLHSTLLPPFRWAEEETEAARWKVIADFLKQNQENGGALQALLSPDGVHEPFDISEQTYDLLGEIRKNVA.

Acidic residues predominate over residues Gly-1 to Gln-32. 2 disordered regions span residues Gly-1–Ile-46 and Val-95–Thr-132. Residues Glu-2–Val-48 adopt a coiled-coil conformation. Residue Ser-14 is modified to Phosphoserine. In terms of domain architecture, SH3 spans Ala-40–Lys-100. A compositionally biased stretch (acidic residues) spans Gln-104–Val-118. Residue Tyr-182 is modified to Phosphotyrosine; by FAK2. Position 554 is a phosphotyrosine; by SRC (Tyr-554).

Belongs to the nephrocystin-1 family. In terms of assembly, interacts with Crk-associated substrate BCAR1, NPHP4, PTK2B/PYK2 and tensin. Interacts with INVS and NPHP3. Interacts with AHI1 and TNK2. Interacts with NPHP4 in a complex containing NPHP1, NPHP4 and RPGRIP1L/NPHP8. Interacts with IQCB1; the interaction likely requires additional interactors. Interacts with KIF7. Interacts with ANKS3. Interacts with SPATA7. Interacts with FLNA. Expressed in renal cells (at protein level).

The protein localises to the cell junction. Its subcellular location is the adherens junction. The protein resides in the cell projection. It localises to the cilium. It is found in the cytoplasm. The protein localises to the cytoskeleton. Its subcellular location is the cilium axoneme. The protein resides in the tight junction. Functionally, together with BCAR1 it may play a role in the control of epithelial cell polarity. Involved in the organization of apical junctions in kidney cells together with NPHP4 and RPGRIP1L/NPHP8. Does not seem to be strictly required for ciliogenesis. Seems to help to recruit PTK2B/PYK2 to cell matrix adhesions, thereby initiating phosphorylation of PTK2B/PYK2 and PTK2B/PYK2-dependent signaling. May play a role in the regulation of intraflagellar transport (IFT) during cilia assembly. Required for normal retina development. In connecting photoreceptor cilia influences the movement of some IFT proteins such as IFT88 and WDR19. Involved in spermatogenesis. The chain is Nephrocystin-1 (NPHP1) from Canis lupus familiaris (Dog).